Consider the following 1117-residue polypeptide: Sodium-driven chloride bicarbonate exchanger (1117 aa).

Polar residues predominate over residues methionine 1–histidine 14. 4 disordered regions span residues methionine 1–glycine 26, glycine 57–proline 94, lysine 244–glutamine 312, and asparagine 456–leucine 475. Topologically, residues methionine 1–cysteine 508 are cytoplasmic. Over residues glutamine 15–glycine 26 the composition is skewed to basic and acidic residues. A compositionally biased stretch (basic residues) spans arginine 58 to aspartate 75. A compositionally biased stretch (basic and acidic residues) spans arginine 76–proline 89. At serine 88 the chain carries Phosphoserine. Threonine 93 is subject to Phosphothreonine. Over residues glutamate 247–serine 263 the composition is skewed to polar residues. Serine 275 is subject to Phosphoserine. A helical membrane pass occupies residues leucine 509 to leucine 529. The Extracellular portion of the chain corresponds to leucine 530 to arginine 537. Residues isoleucine 538–glycine 558 form a helical membrane-spanning segment. Over glycine 559–proline 561 the chain is Cytoplasmic. Residues leucine 562–cysteine 582 form a helical membrane-spanning segment. Over lysine 583–serine 595 the chain is Extracellular. A helical transmembrane segment spans residues isoleucine 596–valine 616. Over cysteine 617–glutamate 625 the chain is Cytoplasmic. Residues alanine 626–leucine 646 traverse the membrane as a helical segment. At serine 647–proline 719 the chain is on the extracellular side. N-linked (GlcNAc...) asparagine glycans are attached at residues asparagine 673, asparagine 676, asparagine 686, and asparagine 696. A helical membrane pass occupies residues tyrosine 720–alanine 740. The Cytoplasmic segment spans residues threonine 741–aspartate 761. Residues phenylalanine 762–serine 782 traverse the membrane as a helical segment. Residues proline 783–asparagine 808 are Extracellular-facing. The helical transmembrane segment at proline 809–methionine 829 threads the bilayer. Over aspartate 830–aspartate 854 the chain is Cytoplasmic. A helical membrane pass occupies residues leucine 855 to alanine 875. At alanine 876–threonine 911 the chain is on the extracellular side. Residues glycine 912–isoleucine 932 traverse the membrane as a helical segment. Residues proline 933–methionine 934 are Cytoplasmic-facing. The chain crosses the membrane as a helical span at residues proline 935–phenylalanine 955. The Extracellular portion of the chain corresponds to aspartate 956–tryptophan 997. The helical transmembrane segment at isoleucine 998–valine 1018 threads the bilayer. The Cytoplasmic segment spans residues arginine 1019–serine 1117. Serine 1056 and serine 1084 each carry phosphoserine.

This sequence belongs to the anion exchanger (TC 2.A.31) family. Post-translationally, N-glycosylated.

The protein localises to the basolateral cell membrane. It localises to the apical cell membrane. It is found in the cell projection. The protein resides in the dendrite. Its subcellular location is the axon. The protein localises to the perikaryon. It localises to the presynapse. It is found in the postsynapse. Functionally, sodium/bicarbonate cotransporter which plays an important role in regulating intracellular pH. Has been shown to act as a sodium/bicarbonate cotransporter in exchange for intracellular chloride. Has also been shown to act as a sodium/biocarbonate cotransporter which does not couple net influx of bicarbonate to net efflux of chloride, with the observed chloride efflux being due to chloride self-exchange. Controls neuronal pH and may contribute to the secretion of cerebrospinal fluid. Acting on presynaptic intracellular pH, it promotes GABA release, reduces the excitability of CA1 pyramidal neurons, and modulates short-term synaptic plasticity. Required in retinal cells to maintain normal pH which is necessary for normal vision. In the kidney, likely to mediate bicarbonate reclamation in the apical membrane of the proximal tubules. The chain is Sodium-driven chloride bicarbonate exchanger from Bos taurus (Bovine).